Consider the following 267-residue polypeptide: L-aspartate dehydrogenase (267 aa).

Residues alanine 124 and asparagine 190 each coordinate NAD(+). Histidine 218 is a catalytic residue.

Belongs to the L-aspartate dehydrogenase family.

It carries out the reaction L-aspartate + NADP(+) + H2O = oxaloacetate + NH4(+) + NADPH + H(+). It catalyses the reaction L-aspartate + NAD(+) + H2O = oxaloacetate + NH4(+) + NADH + H(+). It functions in the pathway cofactor biosynthesis; NAD(+) biosynthesis; iminoaspartate from L-aspartate (dehydrogenase route): step 1/1. In terms of biological role, specifically catalyzes the NAD or NADP-dependent dehydrogenation of L-aspartate to iminoaspartate. The polypeptide is L-aspartate dehydrogenase (Methanococcus maripaludis (strain C6 / ATCC BAA-1332)).